A 414-amino-acid polypeptide reads, in one-letter code: Protein HIM1 (414 aa).

In terms of biological role, may participate in the control of processing of mutational intermediates appearing during error-prone bypass of DNA damage. This chain is Protein HIM1 (HIM1), found in Saccharomyces cerevisiae (strain ATCC 204508 / S288c) (Baker's yeast).